Reading from the N-terminus, the 432-residue chain is 23S rRNA (uracil(1939)-C(5))-methyltransferase RlmD (432 aa).

A TRAM domain is found at 10–68 (RVTTREIITVTTDGLDAFGQGVARHHGKALFIAGLLPGERAEVVLSEDKKQFARGDVKK). Residues Cys81, Cys87, Cys90, and Cys162 each coordinate [4Fe-4S] cluster. Residues Gln265, Phe294, Asn299, Glu315, Asn342, and Asp363 each contribute to the S-adenosyl-L-methionine site. The Nucleophile role is filled by Cys389.

Belongs to the class I-like SAM-binding methyltransferase superfamily. RNA M5U methyltransferase family. RlmD subfamily.

The catalysed reaction is uridine(1939) in 23S rRNA + S-adenosyl-L-methionine = 5-methyluridine(1939) in 23S rRNA + S-adenosyl-L-homocysteine + H(+). Its function is as follows. Catalyzes the formation of 5-methyl-uridine at position 1939 (m5U1939) in 23S rRNA. The sequence is that of 23S rRNA (uracil(1939)-C(5))-methyltransferase RlmD from Cronobacter sakazakii (strain ATCC BAA-894) (Enterobacter sakazakii).